A 469-amino-acid chain; its full sequence is uncharacterized protein (469 aa).

Positions 11–65 form a coiled coil; that stretch reads LFISVAFSQESVEDLKRLLEEYKKKIQEIERRLEELEKAKKEEEKKKEAVALKPT.

This is an uncharacterized protein from Aquifex aeolicus (strain VF5).